The following is a 353-amino-acid chain: Methionine import ATP-binding protein MetN (353 aa).

The ABC transporter domain maps to 8–249 (LDQIDVTFHQ…PKQPLTQDFI (242 aa)). 42-49 (GYSGAGKS) contacts ATP.

Belongs to the ABC transporter superfamily. Methionine importer (TC 3.A.1.24) family. In terms of assembly, the complex is composed of two ATP-binding proteins (MetN), two transmembrane proteins (MetI) and a solute-binding protein (MetQ).

It localises to the cell membrane. The catalysed reaction is L-methionine(out) + ATP + H2O = L-methionine(in) + ADP + phosphate + H(+). It carries out the reaction D-methionine(out) + ATP + H2O = D-methionine(in) + ADP + phosphate + H(+). Functionally, part of the ABC transporter complex MetNIQ involved in methionine import. Responsible for energy coupling to the transport system. The sequence is that of Methionine import ATP-binding protein MetN from Streptococcus pneumoniae serotype 4 (strain ATCC BAA-334 / TIGR4).